Consider the following 309-residue polypeptide: Interferon-inducible double-stranded RNA-dependent protein kinase activator A homolog A (309 aa).

Residues 1-22 form a disordered region; it reads MSQERFPAAPKMSSEKPTSLDA. DRBM domains follow at residues 31–98, 123–191, and 236–304; these read TPIQ…ILRG, NPVG…KFKT, and DYVK…YLKI.

It belongs to the PRKRA family. As to quaternary structure, homodimer. Interacts with dicer1 and eif2ak2/pkr. Also able to interact with dsRNA.

It is found in the cytoplasm. The protein resides in the perinuclear region. Its subcellular location is the nucleus. In terms of biological role, activates eif2ak2/pkr in the absence of double-stranded RNA (dsRNA), leading to phosphorylation of eif2s1/efi2-alpha and inhibition of translation and induction of apoptosis. Required for siRNA production by dicer1 and for subsequent siRNA-mediated post-transcriptional gene silencing. Does not seem to be required for processing of pre-miRNA to miRNA by dicer1. This Xenopus laevis (African clawed frog) protein is Interferon-inducible double-stranded RNA-dependent protein kinase activator A homolog A (prkra-a).